The primary structure comprises 503 residues: AMP phosphorylase (503 aa).

Residues G168, 194 to 199, and T203 each bind AMP; that span reads SRAITS. D256 functions as the Proton donor in the catalytic mechanism. The AMP site is built by S264 and K288.

Belongs to the thymidine/pyrimidine-nucleoside phosphorylase family. Type 2 subfamily.

The catalysed reaction is AMP + phosphate = alpha-D-ribose 1,5-bisphosphate + adenine. It catalyses the reaction CMP + phosphate = cytosine + alpha-D-ribose 1,5-bisphosphate. It carries out the reaction UMP + phosphate = alpha-D-ribose 1,5-bisphosphate + uracil. In terms of biological role, catalyzes the conversion of AMP and phosphate to adenine and ribose 1,5-bisphosphate (R15P). Exhibits phosphorylase activity toward CMP and UMP in addition to AMP. Functions in an archaeal AMP degradation pathway, together with R15P isomerase and RubisCO. The sequence is that of AMP phosphorylase from Pyrococcus furiosus (strain ATCC 43587 / DSM 3638 / JCM 8422 / Vc1).